The chain runs to 331 residues: Decarboxylase orsB (331 aa).

3 residues coordinate Zn(2+): His11, His157, and Asp284.

The protein belongs to the metallo-dependent hydrolases superfamily. ACMSD family.

Its pathway is secondary metabolite biosynthesis. Decarboxylase; part of the gene cluster that mediates the biosynthesis of orsellinic acid, as well as of the cathepsin K inhibitors F9775 A and F9775 B. The non-reducing polyketide synthase orsA produces orsellinic acid by condensing acetyl-CoA with 3 malonyl-CoA units. Further modifications by the decarboxylase orsB and the tyrosinase-like protein orsC lead to the production of F9775 A and F9775 B. The functions of orsD and orsE remain unclear since only orsB and orsC are required to convert orsellinic acid into F9775 A and F9775 B. The sequence is that of Decarboxylase orsB from Emericella nidulans (strain FGSC A4 / ATCC 38163 / CBS 112.46 / NRRL 194 / M139) (Aspergillus nidulans).